A 177-amino-acid polypeptide reads, in one-letter code: Large ribosomal subunit protein uL6 (177 aa).

The protein belongs to the universal ribosomal protein uL6 family. Part of the 50S ribosomal subunit.

In terms of biological role, this protein binds to the 23S rRNA, and is important in its secondary structure. It is located near the subunit interface in the base of the L7/L12 stalk, and near the tRNA binding site of the peptidyltransferase center. The polypeptide is Large ribosomal subunit protein uL6 (Sinorhizobium fredii (strain NBRC 101917 / NGR234)).